We begin with the raw amino-acid sequence, 89 residues long: Signal recognition particle 19 kDa protein (89 aa).

Belongs to the SRP19 family. In terms of assembly, part of the signal recognition particle protein translocation system, which is composed of SRP and FtsY. Archaeal SRP consists of a 7S RNA molecule of 300 nucleotides and two protein subunits: SRP54 and SRP19.

The protein localises to the cytoplasm. Functionally, involved in targeting and insertion of nascent membrane proteins into the cytoplasmic membrane. Binds directly to 7S RNA and mediates binding of the 54 kDa subunit of the SRP. The protein is Signal recognition particle 19 kDa protein of Methanococcus maripaludis (strain C5 / ATCC BAA-1333).